Consider the following 41-residue polypeptide: Cytochrome b559 subunit beta (41 aa).

The helical transmembrane segment at 16-32 (WLAVHALAVPTVFFLGA) threads the bilayer. Heme is bound at residue H20.

The protein belongs to the PsbE/PsbF family. As to quaternary structure, heterodimer of an alpha subunit and a beta subunit. PSII is composed of 1 copy each of membrane proteins PsbA, PsbB, PsbC, PsbD, PsbE, PsbF, PsbH, PsbI, PsbJ, PsbK, PsbL, PsbM, PsbT, PsbX, PsbY, PsbZ, Psb30/Ycf12, at least 3 peripheral proteins of the oxygen-evolving complex and a large number of cofactors. It forms dimeric complexes. It depends on heme b as a cofactor.

It is found in the plastid. It localises to the chloroplast thylakoid membrane. Functionally, this b-type cytochrome is tightly associated with the reaction center of photosystem II (PSII). PSII is a light-driven water:plastoquinone oxidoreductase that uses light energy to abstract electrons from H(2)O, generating O(2) and a proton gradient subsequently used for ATP formation. It consists of a core antenna complex that captures photons, and an electron transfer chain that converts photonic excitation into a charge separation. This chain is Cytochrome b559 subunit beta, found in Chlorella vulgaris (Green alga).